We begin with the raw amino-acid sequence, 604 residues long: MNNMKKIIIISIIIIIIIVLLFYINKSLTNSTKQSLNKIHTDNYDRHVYSNGKYAHFSKITRDDSQLYPSLKYCTKYEFELRSGDMLYIPKGWWHWIESIGRTISVNFWWDNGQIRIPNNKLNLIQPKTRGVNCNKSMVFETNYINNNNSLNNITNPIIIRNGYSSLKEKFTDKFLLDKIPKVEVWDGVNNTVENTTLKKFINSKDKHKYIITLDQFSINNHIKNILKNDVIVPTILSYTNCEYNFWFSYNYMDTGLHYDDYDGLLCVIDGIKKIKLYAPCDSPYLHSFPLFPKWSTILPPTNISYNLYKNIEWMTKPSNNSLPSSMLLFKTVHNKYLITIIDKLYNIYGSNNIIYGIKNSDGKLRWEFYFYRTDTVPGQINILDKNNPESWIPKFSKILQLHMNNVSINKPINKNNLLVSCFDYQPELFPKTDIDLYYSIPNNLKNLSELNSSDLYKIIQTTPETEISSNYPLFIAIYNHNTNLHKGNQIIDFKSSVIKNLDEYLFIFNIPQCKNWIGKTLNYYGSNKNIVCSIAVKKDTVGLFWFGLTTQEFIKFLNENQWNSEYVNWLSTNSKLFDHLSHEICIHYDYNGNPKRSAFYGII.

Positions 1-127 constitute a JmjC domain; that stretch reads MNNMKKIIII…PNNKLNLIQP (127 aa). The chain crosses the membrane as a helical span at residues 4-24; that stretch reads MKKIIIISIIIIIIIVLLFYI.

It localises to the membrane. The polypeptide is Putative JmjC domain-containing protein L887 (Acanthamoeba polyphaga (Amoeba)).